Here is a 145-residue protein sequence, read N- to C-terminus: Large ribosomal subunit protein uL11 (145 aa).

Belongs to the universal ribosomal protein uL11 family. In terms of assembly, part of the ribosomal stalk of the 50S ribosomal subunit. Interacts with L10 and the large rRNA to form the base of the stalk. L10 forms an elongated spine to which L12 dimers bind in a sequential fashion forming a multimeric L10(L12)X complex. In terms of processing, one or more lysine residues are methylated.

In terms of biological role, forms part of the ribosomal stalk which helps the ribosome interact with GTP-bound translation factors. The polypeptide is Large ribosomal subunit protein uL11 (Hydrogenobaculum sp. (strain Y04AAS1)).